The following is a 131-amino-acid chain: Large ribosomal subunit protein eL32 (131 aa).

Belongs to the eukaryotic ribosomal protein eL32 family.

The sequence is that of Large ribosomal subunit protein eL32 (rpl32e) from Sulfurisphaera tokodaii (strain DSM 16993 / JCM 10545 / NBRC 100140 / 7) (Sulfolobus tokodaii).